A 340-amino-acid chain; its full sequence is ATP synthase subunit a (340 aa).

The first 32 residues, 1–32, serve as a signal peptide directing secretion; that stretch reads MKRVNVIQAKAFLKVIALLVPLLLNANGPAFA. The next 6 helical transmembrane spans lie at 107 to 127, 172 to 192, 197 to 217, 236 to 256, 269 to 289, and 296 to 316; these read HVVM…LVGS, LLTV…PYGA, NINV…VAAL, ALWI…PVAL, IVIL…VAVV, and IFIY…FTML.

It belongs to the ATPase A chain family. In terms of assembly, F-type ATPases have 2 components, CF(1) - the catalytic core - and CF(0) - the membrane proton channel. CF(1) has five subunits: alpha(3), beta(3), gamma(1), delta(1), epsilon(1). CF(0) has four main subunits: a, b, b' and c.

The protein resides in the cell inner membrane. Functionally, key component of the proton channel; it plays a direct role in the translocation of protons across the membrane. This Pelodictyon phaeoclathratiforme (strain DSM 5477 / BU-1) protein is ATP synthase subunit a.